Consider the following 474-residue polypeptide: Histone H2B.v2 (474 aa).

3 disordered regions span residues 99 to 123, 276 to 295, and 328 to 394; these read FNNGGNNNNNNEQDNDLQEKEQNEL, TTFTQQEQQEQFNDDKISGD, and FNDN…VNNN. 3 stretches are compositionally biased toward low complexity: residues 100–110, 276–286, and 329–368; these read NNGGNNNNNNE, TTFTQQEQQEQ, and NDNNNNNNNNNNNNNNNNNNNNNNININNDNDNNNNNNKN.

It belongs to the histone H2B family.

The polypeptide is Histone H2B.v2 (H2Bv2) (Dictyostelium discoideum (Social amoeba)).